A 175-amino-acid chain; its full sequence is Ribulose bisphosphate carboxylase small subunit, chloroplastic (175 aa).

The transit peptide at 1-34 (MSFATTNKTIVPCATTKQIVRPRFLSNGTISKSR) directs the protein to the chloroplast.

This sequence belongs to the RuBisCO small chain family. In terms of assembly, heterohexadecamer of 8 large and 8 small subunits.

The protein localises to the plastid. It localises to the chloroplast. RuBisCO catalyzes two reactions: the carboxylation of D-ribulose 1,5-bisphosphate, the primary event in carbon dioxide fixation, as well as the oxidative fragmentation of the pentose substrate. Both reactions occur simultaneously and in competition at the same active site. Although the small subunit is not catalytic it is essential for maximal activity. The sequence is that of Ribulose bisphosphate carboxylase small subunit, chloroplastic from Batophora oerstedii (Green alga).